Consider the following 366-residue polypeptide: MSVVDPSLIERIIRDDVRAMGAYHVPDSHGLVKLDAMENPYRLPPALRSELAARLGEVALNRYPVPSSEALRAKLKEVMQVPAGMEVLLGNGSDEIISMLALAAARPGAKVMAPVPGFVMYAMSAQFAGLEFVGVPLRADFTLDRGAMLAAMAEHQPAIVYLAYPNNPTGNLFDAADMEAIVRAAQGSVCRSLVVVDEAYQPFAQESWMSRLTDFGNLLVMRTVSKLGLAGIRLGYVAGDPQWLEQLDKVRPPYNVNVLTEATALFALEHVAVLDEQAAQLRAERSRVAEGMAAHGGVTVFPSAANFLLARVPDAAQTFDRLLARKVLIKNVSKMHPLLANCLRVTVSTPEENAQFLEAFAASLQD.

Lys226 bears the N6-(pyridoxal phosphate)lysine mark.

This sequence belongs to the class-II pyridoxal-phosphate-dependent aminotransferase family. Histidinol-phosphate aminotransferase subfamily. Homodimer. The cofactor is pyridoxal 5'-phosphate.

The catalysed reaction is L-histidinol phosphate + 2-oxoglutarate = 3-(imidazol-4-yl)-2-oxopropyl phosphate + L-glutamate. The protein operates within amino-acid biosynthesis; L-histidine biosynthesis; L-histidine from 5-phospho-alpha-D-ribose 1-diphosphate: step 7/9. The polypeptide is Histidinol-phosphate aminotransferase 2 (Cupriavidus pinatubonensis (strain JMP 134 / LMG 1197) (Cupriavidus necator (strain JMP 134))).